We begin with the raw amino-acid sequence, 145 residues long: Large ribosomal subunit protein uL16 (145 aa).

This sequence belongs to the universal ribosomal protein uL16 family. In terms of assembly, part of the 50S ribosomal subunit.

In terms of biological role, binds 23S rRNA and is also seen to make contacts with the A and possibly P site tRNAs. In Exiguobacterium sp. (strain ATCC BAA-1283 / AT1b), this protein is Large ribosomal subunit protein uL16.